Here is a 353-residue protein sequence, read N- to C-terminus: Chorismate synthase (353 aa).

R48 is an NADP(+) binding site. FMN is bound by residues 128-130 (RAS), G280, 295-299 (KPIPS), and R321.

Belongs to the chorismate synthase family. In terms of assembly, homotetramer. FMNH2 serves as cofactor.

The enzyme catalyses 5-O-(1-carboxyvinyl)-3-phosphoshikimate = chorismate + phosphate. The protein operates within metabolic intermediate biosynthesis; chorismate biosynthesis; chorismate from D-erythrose 4-phosphate and phosphoenolpyruvate: step 7/7. Functionally, catalyzes the anti-1,4-elimination of the C-3 phosphate and the C-6 proR hydrogen from 5-enolpyruvylshikimate-3-phosphate (EPSP) to yield chorismate, which is the branch point compound that serves as the starting substrate for the three terminal pathways of aromatic amino acid biosynthesis. This reaction introduces a second double bond into the aromatic ring system. The protein is Chorismate synthase of Nitratidesulfovibrio vulgaris (strain DSM 19637 / Miyazaki F) (Desulfovibrio vulgaris).